The following is a 308-amino-acid chain: Ribosomal RNA small subunit methyltransferase H (308 aa).

S-adenosyl-L-methionine-binding positions include 32–34, Asp-51, Phe-78, Asp-99, and Gln-106; that span reads AGH.

This sequence belongs to the methyltransferase superfamily. RsmH family.

The protein localises to the cytoplasm. The enzyme catalyses cytidine(1402) in 16S rRNA + S-adenosyl-L-methionine = N(4)-methylcytidine(1402) in 16S rRNA + S-adenosyl-L-homocysteine + H(+). Specifically methylates the N4 position of cytidine in position 1402 (C1402) of 16S rRNA. The protein is Ribosomal RNA small subunit methyltransferase H of Mesoplasma florum (strain ATCC 33453 / NBRC 100688 / NCTC 11704 / L1) (Acholeplasma florum).